The sequence spans 186 residues: Ribosome-recycling factor (186 aa).

A disordered region spans residues D135 to Q162.

This sequence belongs to the RRF family.

It localises to the cytoplasm. Functionally, responsible for the release of ribosomes from messenger RNA at the termination of protein biosynthesis. May increase the efficiency of translation by recycling ribosomes from one round of translation to another. The polypeptide is Ribosome-recycling factor (Sinorhizobium fredii (strain NBRC 101917 / NGR234)).